The following is a 352-amino-acid chain: AP2/ERF and B3 domain-containing transcription factor At1g51120 (352 aa).

Positions 1–20 (MDEMSNVAKTTTETSGLTDS) are disordered. Over residues 7–20 (VAKTTTETSGLTDS) the composition is skewed to polar residues. Residues 46-103 (KFKGVVQQQNGHWGAQIYADHRRIWLGTFKSAHEAAAAYDSASIKLRSFDANSHRNFP) constitute a DNA-binding region (AP2/ERF). The TF-B3 DNA-binding region spans 178 to 297 (FQKELTPSDV…KTFLMIDVHH (120 aa)).

It belongs to the AP2/ERF transcription factor family. RAV subfamily.

The protein resides in the nucleus. In terms of biological role, probably acts as a transcriptional activator. Binds to the GCC-box pathogenesis-related promoter element. May be involved in the regulation of gene expression by stress factors and by components of stress signal transduction pathways. In Arabidopsis thaliana (Mouse-ear cress), this protein is AP2/ERF and B3 domain-containing transcription factor At1g51120.